The primary structure comprises 239 residues: MESKMILKDGCQELGFHIDDNQVQQLLTYKDILLEWNEKMNLTAITEEEEVMVKHFLDSLSCIQSQYLKEEGTMIDVGTGAGFPGIPLKVYFPKLKLTLLDSLNKRVEFLKEVSQELGLEDVNFVHGRAEECGQEETHREQYDYAVARAVASLNVLVEYCLPFVKVGGYFICQKGPQLKEEIQNSQNAITVLGGKVVEQKEITLPFSDITHSLLVIEKIKQTPTKYPRKPGTPSKKPIK.

Residues Gly-78, Phe-83, 129-130 (AE), and Arg-148 each bind S-adenosyl-L-methionine.

The protein belongs to the methyltransferase superfamily. RNA methyltransferase RsmG family.

The protein localises to the cytoplasm. Functionally, specifically methylates the N7 position of a guanine in 16S rRNA. The chain is Ribosomal RNA small subunit methyltransferase G from Alkaliphilus metalliredigens (strain QYMF).